The primary structure comprises 818 residues: IQ and AAA domain-containing protein 1-like (818 aa).

The 30-residue stretch at 206–235 (QGQAAVTIQKVWKGYLQRKRTQQDRRMEME) folds into the IQ domain. Disordered stretches follow at residues 344-377 (QMQE…AKKG) and 458-482 (EERP…KDLT). Residues 463-476 (RAPKKTPGKKTGKK) show a composition bias toward basic residues. 567-574 (GPSGMGKK) lines the ATP pocket. Residues 795–818 (SMKHRMDQLEAEEAKLDKEKKKRK) are disordered. The segment covering 798 to 818 (HRMDQLEAEEAKLDKEKKKRK) has biased composition (basic and acidic residues).

It belongs to the AAA ATPase family.

This Homo sapiens (Human) protein is IQ and AAA domain-containing protein 1-like (IQCA1L).